The sequence spans 267 residues: GTP cyclohydrolase FolE2 2 (267 aa).

The protein belongs to the GTP cyclohydrolase IV family.

The catalysed reaction is GTP + H2O = 7,8-dihydroneopterin 3'-triphosphate + formate + H(+). It participates in cofactor biosynthesis; 7,8-dihydroneopterin triphosphate biosynthesis; 7,8-dihydroneopterin triphosphate from GTP: step 1/1. Its function is as follows. Converts GTP to 7,8-dihydroneopterin triphosphate. This Cupriavidus metallidurans (strain ATCC 43123 / DSM 2839 / NBRC 102507 / CH34) (Ralstonia metallidurans) protein is GTP cyclohydrolase FolE2 2.